The chain runs to 968 residues: Protein translocase subunit SecA 1 (968 aa).

Residues Gln-86, Gly-104–Thr-108, and Asp-493 contribute to the ATP site. Composition is skewed to basic and acidic residues over residues Glu-858–Asp-868 and Glu-883–Ala-898. Positions Glu-858–Val-968 are disordered. Positions 949, 951, 960, and 961 each coordinate Zn(2+). Residues Lys-955–Val-968 show a composition bias toward basic residues.

Belongs to the SecA family. As to quaternary structure, monomer and homodimer. Part of the essential Sec protein translocation apparatus which comprises SecA, SecYEG and auxiliary proteins SecDF. Other proteins may also be involved. Requires Zn(2+) as cofactor.

Its subcellular location is the cell membrane. It localises to the cytoplasm. It catalyses the reaction ATP + H2O + cellular proteinSide 1 = ADP + phosphate + cellular proteinSide 2.. Part of the Sec protein translocase complex. Interacts with the SecYEG preprotein conducting channel. Has a central role in coupling the hydrolysis of ATP to the transfer of proteins into and across the cell membrane, serving as an ATP-driven molecular motor driving the stepwise translocation of polypeptide chains across the membrane. This chain is Protein translocase subunit SecA 1, found in Thermobifida fusca (strain YX).